The primary structure comprises 1213 residues: DNA-directed RNA polymerase subunit beta' (1213 aa).

Zn(2+)-binding residues include cysteine 60, cysteine 62, cysteine 75, and cysteine 78. The Mg(2+) site is built by aspartate 450, aspartate 452, and aspartate 454. Zn(2+)-binding residues include cysteine 819, cysteine 893, cysteine 900, and cysteine 903.

This sequence belongs to the RNA polymerase beta' chain family. The RNAP catalytic core consists of 2 alpha, 1 beta, 1 beta' and 1 omega subunit. When a sigma factor is associated with the core the holoenzyme is formed, which can initiate transcription. It depends on Mg(2+) as a cofactor. Zn(2+) is required as a cofactor.

The enzyme catalyses RNA(n) + a ribonucleoside 5'-triphosphate = RNA(n+1) + diphosphate. DNA-dependent RNA polymerase catalyzes the transcription of DNA into RNA using the four ribonucleoside triphosphates as substrates. The polypeptide is DNA-directed RNA polymerase subunit beta' (Streptococcus pyogenes serotype M1).